The primary structure comprises 419 residues: Gamma-glutamyl phosphate reductase (419 aa).

The protein belongs to the gamma-glutamyl phosphate reductase family.

It is found in the cytoplasm. The catalysed reaction is L-glutamate 5-semialdehyde + phosphate + NADP(+) = L-glutamyl 5-phosphate + NADPH + H(+). Its pathway is amino-acid biosynthesis; L-proline biosynthesis; L-glutamate 5-semialdehyde from L-glutamate: step 2/2. Its function is as follows. Catalyzes the NADPH-dependent reduction of L-glutamate 5-phosphate into L-glutamate 5-semialdehyde and phosphate. The product spontaneously undergoes cyclization to form 1-pyrroline-5-carboxylate. In Solidesulfovibrio magneticus (strain ATCC 700980 / DSM 13731 / RS-1) (Desulfovibrio magneticus), this protein is Gamma-glutamyl phosphate reductase.